The sequence spans 582 residues: Vesicular glutamate transporter 2 (582 aa).

Topologically, residues 1–71 (MESVKQRILT…CTCFGLPRRY (71 aa)) are cytoplasmic. Residues 72 to 92 (IIAIMSGLGFCISFGIRCNLG) form a helical membrane-spanning segment. Topologically, residues 93-125 (VAIVDMVNNSTIHRGGKVIKEKAKFNWDPETVG) are vesicular. N-linked (GlcNAc...) asparagine glycosylation is found at N100 and N101. Residues 126–146 (MIHGSFFWGYIITQIPGGYIA) form a helical membrane-spanning segment. The Cytoplasmic segment spans residues 147–148 (SR). The chain crosses the membrane as a helical span at residues 149-169 (LAANRVFGAAILLTSTLNMLI). The Vesicular portion of the chain corresponds to 170-177 (PSAARVHY). A helical transmembrane segment spans residues 178-198 (GCVIFVRILQGLVEGVTYPAC). The Cytoplasmic portion of the chain corresponds to 199-216 (HGIWSKWAPPLERSRLAT). A helical transmembrane segment spans residues 217–237 (TSFCGSYAGAVIAMPLAGILV). The Vesicular segment spans residues 238–244 (QYTGWSS). Residues 245–265 (VFYVYGSFGMIWYMFWLLVSY) traverse the membrane as a helical segment. Residues 266 to 310 (ESPAKHPTITDEERRYIEESIGESANLLGAMEKFKTPWRKFFTSM) lie on the Cytoplasmic side of the membrane. Residues 311-331 (PVYAIIVANFCRSWTFYLLLI) form a helical membrane-spanning segment. The Vesicular portion of the chain corresponds to 332–349 (SQPAYFEEVFGFEISKVG). A helical membrane pass occupies residues 350-370 (MLSAVPHLVMTIIVPIGGQIA). The Cytoplasmic portion of the chain corresponds to 371 to 386 (DFLRSKQILSTTTVRK). Residues 387–407 (IMNCGGFGMEATLLLVVGYSH) form a helical membrane-spanning segment. At 408–409 (TR) the chain is on the vesicular side. A helical transmembrane segment spans residues 410–430 (GVAISFLVLAVGFSGFAISGF). The Cytoplasmic portion of the chain corresponds to 431–443 (NVNHLDIAPRYAS). The chain crosses the membrane as a helical span at residues 444 to 464 (ILMGISNGVGTLSGMVCPIIV). At 465–477 (GAMTKNKSREEWQ) the chain is on the vesicular side. Residue N470 is glycosylated (N-linked (GlcNAc...) asparagine). The chain crosses the membrane as a helical span at residues 478–498 (YVFLIAALVHYGGVIFYAIFA). Topologically, residues 499 to 582 (SGEKQPWADP…YNYKDRDDYS (84 aa)) are cytoplasmic.

The protein belongs to the major facilitator superfamily. Sodium/anion cotransporter family. VGLUT subfamily.

It localises to the cytoplasmic vesicle. It is found in the secretory vesicle. Its subcellular location is the synaptic vesicle membrane. The protein localises to the synapse. The protein resides in the synaptosome. It localises to the cell membrane. It catalyses the reaction L-glutamate(out) = L-glutamate(in). The catalysed reaction is 3 Na(+)(out) + phosphate(out) = 3 Na(+)(in) + phosphate(in). The enzyme catalyses phosphate(in) = phosphate(out). It carries out the reaction K(+)(in) + H(+)(out) = K(+)(out) + H(+)(in). It catalyses the reaction chloride(in) = chloride(out). Chloride channel activity is allosterically activated by lumenal H(+) and Cl(-) leading to synaptic vesicles acidification. The L-glutamate transport activity is allosterically activated by lumenal H(+) and Cl(-). The allosteric requirement for H(+) efficiently prevents non-vesicular efflux across the plasma membrane. The L-glutamate uniporter activity exhibits a biphasic dependence on chloride concentration. Functionally, multifunctional transporter that transports L-glutamate as well as multiple ions such as chloride, proton, potassium, sodium and phosphate. At the synaptic vesicle membrane, mainly functions as a uniporter which transports preferentially L-glutamate but also, phosphate from the cytoplasm into synaptic vesicles at presynaptic nerve terminals of excitatory neural cells. The L-glutamate or phosphate uniporter activity is electrogenic and is driven by the proton electrochemical gradient, mainly by the electrical gradient established by the vacuolar H(+)-ATPase across the synaptic vesicle membrane. In addition, functions as a chloride channel that allows a chloride permeation through the synaptic vesicle membrane therefore affects the proton electrochemical gradient and promotes synaptic vesicles acidification. Moreover, functions as a vesicular K(+)/H(+) antiport allowing to maintain the electrical gradient and to decrease chemical gradient and therefore sustain vesicular L-glutamate uptake. The vesicular H(+)/H(+) antiport activity is electroneutral. At the plasma membrane, following exocytosis, functions as a symporter of Na(+) and phosphate from the extracellular space to the cytoplasm allowing synaptic phosphate homeostasis regulation. The symporter activity is driven by an inside negative membrane potential and is electrogenic. Also involved in the regulation of retinal hyaloid vessel regression during postnatal development. May also play a role in the endocrine L-glutamatergic system of other tissues such as pineal gland and pancreas. This Bos taurus (Bovine) protein is Vesicular glutamate transporter 2.